Here is a 449-residue protein sequence, read N- to C-terminus: POU domain, class 5, transcription factor 1.1 (449 aa).

Disordered regions lie at residues 79–125 (ENNQ…SPPN) and 170–233 (YPTP…PSES). A compositionally biased stretch (basic and acidic residues) spans 97 to 110 (SRIKVKEEVVHETD). Polar residues predominate over residues 170–180 (YPTPANQSPNT). Low complexity predominate over residues 187–199 (SSMESSRCSSTNS). Residues 224 to 233 (DNEEEVPSES) show a composition bias toward acidic residues. Residues 227–301 (EEVPSESEME…FLERWVVEAE (75 aa)) enclose the POU-specific domain. A DNA-binding region (homeobox) is located at residues 321–380 (KRKRRTNIENIVKGTLESYFMKCPKPGAQEMVQIAKELNMDKDVVRVWFCNRRQKGKRQG).

The protein belongs to the POU transcription factor family. Class-5 subfamily. Interacts with components of the transcription complex that assembles on the vent2-B gene, including vent2 (via C-terminus), smad1 and smad4. Forms a repression complex on the promoters of the gsc and mix2 genes via interactions with the nodal/activin signaling pathway transducers foxh1/fast1, gtf2ird1/wbscr11 and smad2. Forms a repression complex on the promoters of the nodal/nr1 and siamois genes with the maternal factors tcf7l1/tcf3 and vegt. As to expression, highly enriched within the animal half of developing embryos within ectodermal and mesodermal regions. Expressed in the neuroectoderm at the early neurula stage, with expression initially extending to the future hindbrain/midbrain boundary, but later shifting toward the posterior pole where it persists within the tip of the tail in hatching embryos. Expressed at very low levels in the adult kidney.

Its subcellular location is the nucleus. Transcription factor that binds to the octamer motif (5'-ATTTGCAT-3'). Activates transcription when directly bound to the octamer DNA sequence, but can form repression complexes with other proteins at the promoter site to inhibit transcription. Binds to the promoter of the vent2-B gene to activate transcription when in the presence of other BMP signaling factors also bound to the promoter. Inhibits the competence of ectodermal cells to respond to BMP during embryogenesis thereby inhibiting epidermal differentiation and promoting neural induction. Antagonizes the activity of nodal/activin signaling by forming a transcriptional repression complex on the gsc and mix2 gene promoters to inhibit their transcription, and thus maintain the undifferentiated state of embryonic cells to prevent them from differentiating prematurely. Acts maternally to inhibit vegt and beta-catenin-activated gene transcription by forming a transcriptional repression complex on the nodal/nr1 and siamois promoters to inhibit their transcription. This Xenopus laevis (African clawed frog) protein is POU domain, class 5, transcription factor 1.1 (pou5f1.1).